Consider the following 281-residue polypeptide: D-arabinitol 2-dehydrogenase [ribulose-forming] (281 aa).

NADP(+) contacts are provided by leucine 31 and asparagine 52. The active-site Proton donor is the serine 169. Tyrosine 184, lysine 188, isoleucine 217, and threonine 219 together coordinate NADP(+). Tyrosine 184 acts as the Proton acceptor in catalysis. Catalysis depends on lysine 188, which acts as the Lowers pKa of active site Tyr.

Belongs to the short-chain dehydrogenases/reductases (SDR) family.

It catalyses the reaction D-arabinitol + NAD(+) = D-ribulose + NADH + H(+). The protein operates within carbohydrate metabolism; D-arabinitol metabolism. This is D-arabinitol 2-dehydrogenase [ribulose-forming] (ARD1) from Candida albicans (strain WO-1) (Yeast).